The sequence spans 25 residues: FVKELWDKVKKMGSAAWSAAKGAFA.

It belongs to the ponericin-L family. In terms of tissue distribution, expressed by the venom gland.

Its subcellular location is the secreted. The protein resides in the target cell membrane. Its function is as follows. Membrane-perturbating peptide with multiple activities. It is insecticidal, since it induces reversible paralysis in insects (L.cuprina) after 1 hour, but fails to kill them. It shows moderate antibacterial activity against some Gram-positive and Gram-negative bacteria. It is also antiparasitic, since it moderately inhibits the larval development of the major pathogenic nematode of ruminants (H.contortus, IC(50)=23.2 uM), but fails to reduce the motility of adult males of the other nematode B.malayi. It also shows moderate cytotoxic activity against HEK293 cells (EC(50)=48-57 uM) but does not induce hemolysis in human erythrocytes. It also causes a moderate increase in intracellular calcium concentration on neuronal and epithelial cell lines, which supports a non-specific membrane perturbation mechanism of action. This is M-poneritoxin-Nc2a from Neoponera commutata (Large hunting ant).